Here is a 289-residue protein sequence, read N- to C-terminus: Serine/threonine-protein phosphatase Pgam5, mitochondrial (289 aa).

A helical transmembrane segment spans residues 7-23 (FVCGTGAGLAAYYLQRL).

The protein belongs to the phosphoglycerate mutase family. BPG-dependent PGAM subfamily. Interacts with Pk92B/ASK1.

The protein resides in the mitochondrion outer membrane. It catalyses the reaction O-phospho-L-seryl-[protein] + H2O = L-seryl-[protein] + phosphate. The enzyme catalyses O-phospho-L-threonyl-[protein] + H2O = L-threonyl-[protein] + phosphate. Displays phosphatase activity for serine/threonine residues, and dephosphorylates and activates Pk92B kinase. Has apparently no phosphoglycerate mutase activity. The polypeptide is Serine/threonine-protein phosphatase Pgam5, mitochondrial (Pgam5) (Drosophila melanogaster (Fruit fly)).